The following is an 819-amino-acid chain: MHAMESRVLLRTFCVILGLGAVWGLGVDPSLQIDVLTELELGESTDGVRQVPGLHNGTKAFLFQESPRSIKASTATAERFFQKLRNKHEFTILVTLKQIHLNSGVILSIHHLDHRYLELESSGHRNEIRLHYRSGTHRPHTEVFPYILADAKWHKLSLAFSASHLILHIDCNKIYERVVEMPSTDLPLGTTFWLGQRNNAHGYFKGIMQDVHVLVMPQGFIAQCPDLNRTCPTCNDFHGLVQKIMELQDILSKTSAKLSRAEQRMNRLDQCYCERTCTVKGTTYRESESWTDGCKNCTCLNGTIQCETLVCPAPDCPPKSAPAYVDGKCCKECKSTCQFQGRSYFEGERNTVYSSSGMCVLYECKDQTMKLVENIGCPPLDCPESHQIALSHSCCKVCKGYDFCSEKHTCMENSVCRNLNDRAVCSCRDGFRALREDNAYCEDIDECAEGRHYCRENTMCVNTPGSFMCICKTGYIRIDDYSCTEHDECLTNQHNCDENALCFNTVGGHNCVCKPGYTGNGTTCKAFCKDGCRNGGACIAANVCACPQGFTGPSCETDIDECSEGFVQCDSRANCINLPGWYHCECRDGYHDNGMFAPGGESCEDIDECGTGRHSCTNDTICFNLDGGYDCRCPHGKNCTGDCVHEGKVKHTGQIWVLENDRCSVCSCQTGFVMCRRMVCDCENPTVDLSCCPECDPRLSSQCLHQNGETVYNSGDTWVQDCRQCRCLQGEVDCWPLACPEVECEFSVLPENECCPRCVTDPCQADTIRNDITKTCLDEMNVVRFTGSSWIKHGTECTLCQCKNGHLCCSVDPQCLQEL.

An N-terminal signal peptide occupies residues 1–24 (MHAMESRVLLRTFCVILGLGAVWG). N-linked (GlcNAc...) asparagine glycosylation is found at Asn56, Asn228, Asn296, and Asn301. The 165-residue stretch at 67 to 231 (PRSIKASTAT…AQCPDLNRTC (165 aa)) folds into the Laminin G-like domain. The VWFC 1 domain occupies 275 to 334 (RTCTVKGTTYRESESWTDGCKNCTCLNGTIQCETLVCPAPDCPPKSAPAYVDGKCCKECK). The EGF-like 1 domain maps to 400–442 (GYDFCSEKHTCMENSVCRNLNDRAVCSCRDGFRALREDNAYCE). 3 disulfides stabilise this stretch: Cys404-Cys416, Cys410-Cys425, and Cys427-Cys441. Residues Asp443, Ile444, and Glu446 each coordinate Ca(2+). In terms of domain architecture, EGF-like 2; calcium-binding spans 443–484 (DIDECAEGRHYCRENTMCVNTPGSFMCICKTGYIRIDDYSCT). 9 disulfide bridges follow: Cys447–Cys460, Cys454–Cys469, Cys471–Cys483, Cys489–Cys502, Cys496–Cys511, Cys513–Cys524, Cys528–Cys538, Cys532–Cys544, and Cys546–Cys555. 3 residues coordinate Ca(2+): Asn462, Thr463, and Ser466. Residues 485-525 (EHDECLTNQHNCDENALCFNTVGGHNCVCKPGYTGNGTTCK) form the EGF-like 3; calcium-binding domain. Asn520 carries an N-linked (GlcNAc...) asparagine glycan. The 31-residue stretch at 526–556 (AFCKDGCRNGGACIAANVCACPQGFTGPSCE) folds into the EGF-like 4 domain. The O-linked (GlcNAc...) threonine glycan is linked to Thr551. Ca(2+) is bound by residues Asp558, Ile559, and Glu561. One can recognise an EGF-like 5; calcium-binding domain in the interval 558-604 (DIDECSEGFVQCDSRANCINLPGWYHCECRDGYHDNGMFAPGGESCE). 3 cysteine pairs are disulfide-bonded: Cys562–Cys575, Cys569–Cys584, and Cys586–Cys603. Ca(2+)-binding residues include Asn577, Leu578, and Trp581. Ca(2+)-binding residues include Asp605, Ile606, and Glu608. The EGF-like 6; calcium-binding domain maps to 605–640 (DIDECGTGRHSCTNDTICFNLDGGYDCRCPHGKNCT). 3 disulfides stabilise this stretch: Cys609–Cys622, Cys616–Cys631, and Cys633–Cys639. The N-linked (GlcNAc...) asparagine glycan is linked to Asn618. Residues Asn624, Leu625, and Gly628 each contribute to the Ca(2+) site. Residue Asn638 is glycosylated (N-linked (GlcNAc...) asparagine). Residues 701–759 (SQCLHQNGETVYNSGDTWVQDCRQCRCLQGEVDCWPLACPEVECEFSVLPENECCPRCV) enclose the VWFC 2 domain.

Homotrimer. Interacts with NICOL1; this interaction triggers epididymal differentiation. Interacts (via EGF domains) with ROBO3 (via FN domains); binding to ROBO3 induces repulsive guidance cue for commissural axons. In terms of tissue distribution, expressed in brain and testis but not in epididymis. Expressed in regions flanking the commissural axon trajectory, including the ventral horn.

It is found in the secreted. Plays multiple roles in neural tissues, regulates neuronal proliferation, survival, differentiation, polarization, as well as axon guidance and synaptic functions. Plays an important role in axon development during neuronal differentiation through the MAPK intracellular signaling pathway. Via binding to its receptor ROBO3, plays a role in axon guidance, functioning as a repulsive axon guidance cue that contributes to commissural axon guidance to the midline. Required for neuron survival through the modulation of MAPK signaling pathways too. Involved in the regulation of hypothalamic GNRH secretion and the control of puberty. Its function is as follows. Epididymal-secreted protein that signals through a ROS1-pathway to regulate the epididymal initial segment (IS) maturation, sperm maturation and male fertility. This Mus musculus (Mouse) protein is Protein kinase C-binding protein NELL2.